The primary structure comprises 56 residues: Large ribosomal subunit protein bL32 (56 aa).

Residues 1 to 36 form a disordered region; it reads MAVQQNKKSRSKRGMRRSHDALSTAQLSVDATSGEV. Positions 7-16 are enriched in basic residues; that stretch reads KKSRSKRGMR. A compositionally biased stretch (polar residues) spans 21–31; the sequence is ALSTAQLSVDA.

The protein belongs to the bacterial ribosomal protein bL32 family.

In Shewanella oneidensis (strain ATCC 700550 / JCM 31522 / CIP 106686 / LMG 19005 / NCIMB 14063 / MR-1), this protein is Large ribosomal subunit protein bL32.